A 147-amino-acid polypeptide reads, in one-letter code: Hemoglobin subunit beta (147 aa).

V2 is subject to N-acetylvaline. Positions 3 to 147 (HLTGEEKAAV…VANALAHKYH (145 aa)) constitute a Globin domain. T13 is modified (phosphothreonine). Phosphoserine is present on S45. The residue at position 60 (K60) is an N6-acetyllysine. H64 lines the heme b pocket. K83 bears the N6-acetyllysine mark. A heme b-binding site is contributed by H93. C94 is modified (S-nitrosocysteine). At K145 the chain carries N6-acetyllysine.

This sequence belongs to the globin family. As to quaternary structure, heterotetramer of two alpha chains and two beta chains. As to expression, red blood cells.

In terms of biological role, involved in oxygen transport from the lung to the various peripheral tissues. The chain is Hemoglobin subunit beta (HBB) from Ailuropoda melanoleuca (Giant panda).